The sequence spans 171 residues: Large ribosomal subunit protein uL10 (171 aa).

This sequence belongs to the universal ribosomal protein uL10 family. As to quaternary structure, part of the ribosomal stalk of the 50S ribosomal subunit. The N-terminus interacts with L11 and the large rRNA to form the base of the stalk. The C-terminus forms an elongated spine to which L12 dimers bind in a sequential fashion forming a multimeric L10(L12)X complex.

Forms part of the ribosomal stalk, playing a central role in the interaction of the ribosome with GTP-bound translation factors. This Nitrosomonas eutropha (strain DSM 101675 / C91 / Nm57) protein is Large ribosomal subunit protein uL10.